A 456-amino-acid polypeptide reads, in one-letter code: Probable glycine dehydrogenase (decarboxylating) subunit 1 (456 aa).

The protein belongs to the GcvP family. N-terminal subunit subfamily. In terms of assembly, the glycine cleavage system is composed of four proteins: P, T, L and H. In this organism, the P 'protein' is a heterodimer of two subunits.

It carries out the reaction N(6)-[(R)-lipoyl]-L-lysyl-[glycine-cleavage complex H protein] + glycine + H(+) = N(6)-[(R)-S(8)-aminomethyldihydrolipoyl]-L-lysyl-[glycine-cleavage complex H protein] + CO2. Functionally, the glycine cleavage system catalyzes the degradation of glycine. The P protein binds the alpha-amino group of glycine through its pyridoxal phosphate cofactor; CO(2) is released and the remaining methylamine moiety is then transferred to the lipoamide cofactor of the H protein. This chain is Probable glycine dehydrogenase (decarboxylating) subunit 1, found in Legionella pneumophila (strain Corby).